A 354-amino-acid chain; its full sequence is Uroporphyrinogen decarboxylase (354 aa).

Substrate contacts are provided by residues 27-31 (RQAGR), aspartate 77, tyrosine 154, threonine 209, and histidine 327.

This sequence belongs to the uroporphyrinogen decarboxylase family. As to quaternary structure, homodimer.

It is found in the cytoplasm. The catalysed reaction is uroporphyrinogen III + 4 H(+) = coproporphyrinogen III + 4 CO2. The protein operates within porphyrin-containing compound metabolism; protoporphyrin-IX biosynthesis; coproporphyrinogen-III from 5-aminolevulinate: step 4/4. Its function is as follows. Catalyzes the decarboxylation of four acetate groups of uroporphyrinogen-III to yield coproporphyrinogen-III. The chain is Uroporphyrinogen decarboxylase from Pseudomonas putida (strain GB-1).